The chain runs to 84 residues: UPF0291 protein SMU_447 (84 aa).

Residues 57–84 (EGNDITPAKLKEIQRQKGIHGRKPEDNS) form a disordered region.

The protein belongs to the UPF0291 family.

It localises to the cytoplasm. This is UPF0291 protein SMU_447 from Streptococcus mutans serotype c (strain ATCC 700610 / UA159).